A 130-amino-acid polypeptide reads, in one-letter code: Glycine cleavage system H protein (130 aa).

Residues 22–103 (KAYIGISDCA…PYGSWIAAIE (82 aa)) enclose the Lipoyl-binding domain. Lys63 is modified (N6-lipoyllysine).

This sequence belongs to the GcvH family. As to quaternary structure, the glycine cleavage system is composed of four proteins: P, T, L and H. (R)-lipoate serves as cofactor.

The glycine cleavage system catalyzes the degradation of glycine. The H protein shuttles the methylamine group of glycine from the P protein to the T protein. This chain is Glycine cleavage system H protein, found in Clostridium botulinum (strain ATCC 19397 / Type A).